The chain runs to 528 residues: Calcium-dependent protein kinase 4 (528 aa).

The segment covering 1–16 (MGQEMSTQSDMQNENQ) has biased composition (polar residues). The tract at residues 1–36 (MGQEMSTQSDMQNENQKGNKRNLKGSQGKNGLKERS) is disordered. Gly-2 is lipidated: N-myristoyl glycine. Residues 70–328 (YKGIKILGKG…ARDALEHEWI (259 aa)) form the Protein kinase domain. Residues 76–84 (LGKGSFGEV) and Lys-99 contribute to the ATP site. Residue Asp-193 is the Proton acceptor of the active site. A J domain autoinhibitory motif motif is present at residues 350–358 (NIKQFQSTQ). The interval 350–386 (NIKQFQSTQKLAQAALLYMGSKLTTIDETKELTKIFK) is j domain. A J domain EF-hand interaction motif motif is present at residues 359–368 (KLAQAALLYM). EF-hand domains follow at residues 376-411 (DETK…LLKL), 423-458 (AIEV…RKLL), 459-494 (LSTE…GDVS), and 498-528 (WKTV…LCNY). Residues Asp-389, Asn-391, Asp-393, Gln-395, Glu-400, Asp-436, Asp-438, Asn-440, Tyr-442, Glu-447, Asp-472, Asp-474, Ser-476, Lys-478, Glu-483, Asp-506, Asn-508, Asp-510, Glu-512, and Glu-517 each coordinate Ca(2+).

It belongs to the protein kinase superfamily. Ser/Thr protein kinase family. CDPK subfamily. May interact with the pre-replication MCM complex prior male gametogenesis activation. Mg(2+) is required as a cofactor. In terms of processing, myristoylated; myristoylation may target it to different subcellular compartments. During male gametogenesis, myristoylation is required to initiate DNA replication but not for mitotic spindle assembly or axoneme activation. Not palmitoylated. Post-translationally, may be autophosphorylated on Thr-234 in vitro.

The protein localises to the cytoplasm. The protein resides in the membrane. It localises to the chromosome. The enzyme catalyses L-seryl-[protein] + ATP = O-phospho-L-seryl-[protein] + ADP + H(+). It catalyses the reaction L-threonyl-[protein] + ATP = O-phospho-L-threonyl-[protein] + ADP + H(+). Activated by calcium. Upon calcium binding to the EF-hand domains, the C-terminus of the junction domain (J domain) undergoes a conformational change which results in the dissociation of the pseudo-substrate inhibitory motif from the catalytic domain. This, in turn, may facilitate the autophosphorylation of the activation loop at Thr-234, which leads to the kinase activation. Intracellular calcium increase is triggered by xanthurenic acid (XA), a small mosquito molecule that induces the differentiation of specialized transmission stages, the gametocytes, into male and female gametes. Activated by a decrease in temperature (20 degrees Celsius) and an increase in pH (7.6) occurring when the parasite is ingested by in the mosquito. Functionally, calcium-dependent protein kinase which acts as a sensor and effector of intracellular Ca(2+) levels probably in part downstream of cGMP-activated PKG kinase. Plays a central role in the host erythrocytes and hepatocytes infection cycles, sexual reproduction and mosquito transmission of the parasite. During the liver stage, involved in sporozoite motility and thus in sporozoite invasion of host hepatocytes, probably together with CDPK1 and CDPK5. Involved in merosome egress from host hepatocytes, probably together with CDPK5. During the asexual blood stage, involved in merozoite invasion of host erythrocytes and motility by stabilizing the inner membrane complex, a structure below the plasma membrane which acts as an anchor for the glidosome, an acto-myosin motor. Required for cell cycle progression in the male gametocyte. During male gametogenesis in the mosquito gut, required to initiate the first round of DNA replication, probably by facilitating the assembly of the pre-replicative MCM complex, to assemble the first mitotic spindle and, at the end of gametogenesis, to initiate axoneme motility, cytokinesis and subsequent exflagellation. For each of these steps, may phosphorylate SOC1, SOC2 and SOC3, respectively. Together with CDPK1, regulates ookinete gliding in the mosquito host midgut. During male gametogenesis in the mosquito gut, required to initiate the first round of DNA replication, probably by facilitating the assembly of the pre-replicative MCM complex, and to assemble the first mitotic spindle. Its function is as follows. At the end of male gametogenesis in the mosquito gut, required to initiate axoneme motility, cytokinesis and subsequent exflagellation. The polypeptide is Calcium-dependent protein kinase 4 (Plasmodium berghei (strain Anka)).